The chain runs to 152 residues: MRGLLGSSWKKFGHAGRGTYEWLTSEPGLPLLETQLQGTQGVSSTQEDVEPFLCILLPATILLFLAFLLLFLYRRCKSPPPQGQVFSIDLPEHPPAGEVTDLLPGLAWSSEDFPYSPLPPEATLPSQCLPPSYEEATRNPPGEEAQGCSPSV.

A helical transmembrane segment spans residues Phe52 to Leu72. A disordered region spans residues Pro117 to Val152.

Its subcellular location is the membrane. The polypeptide is Small integral membrane protein 28 (Homo sapiens (Human)).